A 98-amino-acid polypeptide reads, in one-letter code: Lactococcin-A immunity protein (98 aa).

Imparts immunity to lactococcin-A to naturally sensitive host strains. This chain is Lactococcin-A immunity protein (lciA), found in Lactococcus lactis subsp. cremoris (Streptococcus cremoris).